Here is a 906-residue protein sequence, read N- to C-terminus: Peroxisomal hydratase-dehydrogenase-epimerase (906 aa).

2 short-chain dehydrogenase like regions span residues 5-228 and 319-532; these read DFKD…SSAE and SLKD…GTDD. Residues Ile-13, Lys-52, Asn-98, and Lys-131 each coordinate NADP(+). Active-site proton donor residues include Ser-149 and Tyr-163. Residues Tyr-163 and Lys-167 each contribute to the NADP(+) site. The active-site Proton acceptor is Tyr-163. Lys-167 serves as the catalytic Lowers pKa of active site Tyr. The Proton acceptor role is filled by Tyr-467. The tract at residues 600–633 is disordered; it reads AVGGDDDDDDEDEEEDEGDEEEDEEDEEEDDPVW. Over residues 603-630 the composition is skewed to acidic residues; it reads GDDDDDDEDEEEDEGDEEEDEEDEEEDD. 10 residues coordinate (3R)-3-hydroxydecanoyl-CoA: His-699, Gly-700, Lys-729, Tyr-757, Asp-808, Asn-810, Gly-831, Phe-856, Thr-857, and Gly-858. One can recognise a MaoC-like domain in the interval 782 to 893; sequence APKRAPDYQV…VVDRGTIAIN (112 aa). A Microbody targeting signal motif is present at residues 904 to 906; the sequence is AKI.

It belongs to the short-chain dehydrogenases/reductases (SDR) family. In terms of assembly, monomer.

Its subcellular location is the peroxisome. It catalyses the reaction a (3R)-3-hydroxyacyl-CoA = a (2E)-enoyl-CoA + H2O. The enzyme catalyses a (3R)-3-hydroxyacyl-CoA + NAD(+) = a 3-oxoacyl-CoA + NADH + H(+). It participates in lipid metabolism; fatty acid beta-oxidation. Functionally, second trifunctional enzyme acting on the beta-oxidation pathway for fatty acids, possessing hydratase-dehydrogenase-epimerase activities. Converts trans-2-enoyl-CoA via D-3-hydroxyacyl-CoA to 3-ketoacyl-CoA. The sequence is that of Peroxisomal hydratase-dehydrogenase-epimerase from Candida tropicalis (Yeast).